Reading from the N-terminus, the 214-residue chain is Molybdenum cofactor guanylyltransferase (214 aa).

Residues 18–20 (LAG), K31, D77, and D112 each bind GTP. D112 is a binding site for Mg(2+).

It belongs to the MobA family. Monomer. Requires Mg(2+) as cofactor.

It localises to the cytoplasm. The catalysed reaction is Mo-molybdopterin + GTP + H(+) = Mo-molybdopterin guanine dinucleotide + diphosphate. In terms of biological role, transfers a GMP moiety from GTP to Mo-molybdopterin (Mo-MPT) cofactor (Moco or molybdenum cofactor) to form Mo-molybdopterin guanine dinucleotide (Mo-MGD) cofactor. In Rhodopseudomonas palustris (strain HaA2), this protein is Molybdenum cofactor guanylyltransferase.